Reading from the N-terminus, the 258-residue chain is Mediator of RNA polymerase II transcription subunit 7 (258 aa).

2 disordered regions span residues methionine 1 to histidine 39 and glutamate 202 to valine 243. Positions lysine 203–glutamate 217 are enriched in acidic residues. A compositionally biased stretch (polar residues) spans serine 220–lysine 229.

The protein belongs to the Mediator complex subunit 7 family. As to quaternary structure, component of the Mediator complex.

The protein resides in the nucleus. Functionally, component of the Mediator complex, a coactivator involved in the regulated transcription of nearly all RNA polymerase II-dependent genes. Mediator functions as a bridge to convey information from gene-specific regulatory proteins to the basal RNA polymerase II transcription machinery. Mediator is recruited to promoters by direct interactions with regulatory proteins and serves as a scaffold for the assembly of a functional preinitiation complex with RNA polymerase II and the general transcription factors. This chain is Mediator of RNA polymerase II transcription subunit 7 (let-49), found in Caenorhabditis briggsae.